The sequence spans 408 residues: Zinc finger and SCAN domain-containing protein 1 (408 aa).

The disordered stretch occupies residues 1–34; it reads MLPRPKAPASPRRPQTPTPSEQDADPGPASPRDT. Residues 38–120 enclose the SCAN box domain; that stretch reads RLRFRQFQYH…SLVEDLTQMC (83 aa). 3 disordered regions span residues 136–155, 177–203, and 215–273; these read WSFG…EPSQ, LETT…LLGS, and DEPE…GGTQ. Polar residues predominate over residues 177 to 187; the sequence is LETTQLQQSLH. 2 consecutive C2H2-type zinc fingers follow at residues 292–314 and 320–342; these read FQCA…QKTH and FPCP…GKIH. A disordered region spans residues 344 to 379; that stretch reads LEPPRKKAPRSKGPRESVPPRDGAQGPVAPRSPKRP. The C2H2-type 3 zinc-finger motif lies at 380 to 402; sequence FQCSVCGKAFPWMVHLIDHQKLH.

It localises to the nucleus. Functionally, may be involved in transcriptional regulation. The chain is Zinc finger and SCAN domain-containing protein 1 (ZSCAN1) from Homo sapiens (Human).